Consider the following 117-residue polypeptide: Large ribosomal subunit protein bL19 (117 aa).

This sequence belongs to the bacterial ribosomal protein bL19 family.

In terms of biological role, this protein is located at the 30S-50S ribosomal subunit interface and may play a role in the structure and function of the aminoacyl-tRNA binding site. The polypeptide is Large ribosomal subunit protein bL19 (Exiguobacterium sp. (strain ATCC BAA-1283 / AT1b)).